The chain runs to 102 residues: Ribosomal silencing factor RsfS (102 aa).

This sequence belongs to the Iojap/RsfS family. Interacts with ribosomal protein uL14 (rplN).

Its subcellular location is the cytoplasm. Functionally, functions as a ribosomal silencing factor. Interacts with ribosomal protein uL14 (rplN), blocking formation of intersubunit bridge B8. Prevents association of the 30S and 50S ribosomal subunits and the formation of functional ribosomes, thus repressing translation. This Haemophilus influenzae (strain ATCC 51907 / DSM 11121 / KW20 / Rd) protein is Ribosomal silencing factor RsfS.